The sequence spans 444 residues: tRNA-2-methylthio-N(6)-dimethylallyladenosine synthase (444 aa).

The MTTase N-terminal domain occupies 6–124; it reads KTFKIITYGC…LPQLIEEIKA (119 aa). Cysteine 15, cysteine 51, cysteine 85, cysteine 161, cysteine 165, and cysteine 168 together coordinate [4Fe-4S] cluster. The Radical SAM core domain occupies 147–377; that stretch reads RARGAQAFVT…MELQNSISLA (231 aa). In terms of domain architecture, TRAM spans 380-443; the sequence is EALVGQEVEV…TWLLKGEMVD (64 aa).

Belongs to the methylthiotransferase family. MiaB subfamily. Monomer. [4Fe-4S] cluster serves as cofactor.

The protein localises to the cytoplasm. It catalyses the reaction N(6)-dimethylallyladenosine(37) in tRNA + (sulfur carrier)-SH + AH2 + 2 S-adenosyl-L-methionine = 2-methylsulfanyl-N(6)-dimethylallyladenosine(37) in tRNA + (sulfur carrier)-H + 5'-deoxyadenosine + L-methionine + A + S-adenosyl-L-homocysteine + 2 H(+). Functionally, catalyzes the methylthiolation of N6-(dimethylallyl)adenosine (i(6)A), leading to the formation of 2-methylthio-N6-(dimethylallyl)adenosine (ms(2)i(6)A) at position 37 in tRNAs that read codons beginning with uridine. The protein is tRNA-2-methylthio-N(6)-dimethylallyladenosine synthase of Moorella thermoacetica (strain ATCC 39073 / JCM 9320).